Consider the following 203-residue polypeptide: Thymidylate kinase (203 aa).

10–17 (GIDGAGKS) is a binding site for ATP.

It belongs to the thymidylate kinase family.

It carries out the reaction dTMP + ATP = dTDP + ADP. Phosphorylation of dTMP to form dTDP in both de novo and salvage pathways of dTTP synthesis. The sequence is that of Thymidylate kinase from Cupriavidus necator (strain ATCC 17699 / DSM 428 / KCTC 22496 / NCIMB 10442 / H16 / Stanier 337) (Ralstonia eutropha).